The sequence spans 242 residues: 4-hydroxy-tetrahydrodipicolinate reductase (242 aa).

NAD(+) is bound by residues 8–13 (GAKGRM), 75–77 (GTT), and 99–102 (ATNM). The active-site Proton donor/acceptor is the His-131. A (S)-2,3,4,5-tetrahydrodipicolinate-binding site is contributed by His-132. Lys-135 functions as the Proton donor in the catalytic mechanism. 141–142 (GT) contributes to the (S)-2,3,4,5-tetrahydrodipicolinate binding site.

This sequence belongs to the DapB family.

The protein resides in the cytoplasm. The enzyme catalyses (S)-2,3,4,5-tetrahydrodipicolinate + NAD(+) + H2O = (2S,4S)-4-hydroxy-2,3,4,5-tetrahydrodipicolinate + NADH + H(+). The catalysed reaction is (S)-2,3,4,5-tetrahydrodipicolinate + NADP(+) + H2O = (2S,4S)-4-hydroxy-2,3,4,5-tetrahydrodipicolinate + NADPH + H(+). It participates in amino-acid biosynthesis; L-lysine biosynthesis via DAP pathway; (S)-tetrahydrodipicolinate from L-aspartate: step 4/4. Catalyzes the conversion of 4-hydroxy-tetrahydrodipicolinate (HTPA) to tetrahydrodipicolinate. The polypeptide is 4-hydroxy-tetrahydrodipicolinate reductase (Campylobacter jejuni subsp. jejuni serotype O:2 (strain ATCC 700819 / NCTC 11168)).